Reading from the N-terminus, the 519-residue chain is Arabinose import ATP-binding protein AraG 2 (519 aa).

2 ABC transporter domains span residues 29 to 264 (LSLD…MVGR) and 264 to 515 (RSIE…LIKL). Residue 61 to 68 (GENGAGKS) participates in ATP binding.

This sequence belongs to the ABC transporter superfamily. Arabinose importer (TC 3.A.1.2.2) family. The complex is composed of two ATP-binding proteins (AraG), two transmembrane proteins (AraH) and a solute-binding protein (AraF).

The protein localises to the cell inner membrane. The catalysed reaction is L-arabinose(out) + ATP + H2O = L-arabinose(in) + ADP + phosphate + H(+). In terms of biological role, part of the ABC transporter complex AraFGH involved in arabinose import. Responsible for energy coupling to the transport system. In Burkholderia ambifaria (strain ATCC BAA-244 / DSM 16087 / CCUG 44356 / LMG 19182 / AMMD) (Burkholderia cepacia (strain AMMD)), this protein is Arabinose import ATP-binding protein AraG 2.